Consider the following 284-residue polypeptide: 2-dehydro-3-deoxyphosphooctonate aldolase (284 aa).

Belongs to the KdsA family.

The protein resides in the cytoplasm. The enzyme catalyses D-arabinose 5-phosphate + phosphoenolpyruvate + H2O = 3-deoxy-alpha-D-manno-2-octulosonate-8-phosphate + phosphate. Its pathway is carbohydrate biosynthesis; 3-deoxy-D-manno-octulosonate biosynthesis; 3-deoxy-D-manno-octulosonate from D-ribulose 5-phosphate: step 2/3. The protein operates within bacterial outer membrane biogenesis; lipopolysaccharide biosynthesis. This is 2-dehydro-3-deoxyphosphooctonate aldolase from Enterobacter sp. (strain 638).